The chain runs to 155 residues: uncharacterized protein (155 aa).

This is an uncharacterized protein from Rickettsia prowazekii (strain Madrid E).